We begin with the raw amino-acid sequence, 257 residues long: Acetylglutamate kinase (257 aa).

Substrate-binding positions include 43 to 44 (GG), Arg-65, and Asn-157. ATP is bound by residues 180 to 185 (DVSGIL) and 208 to 210 (IIT).

Belongs to the acetylglutamate kinase family. ArgB subfamily. In terms of assembly, homodimer.

It localises to the cytoplasm. The enzyme catalyses N-acetyl-L-glutamate + ATP = N-acetyl-L-glutamyl 5-phosphate + ADP. The protein operates within amino-acid biosynthesis; L-arginine biosynthesis; N(2)-acetyl-L-ornithine from L-glutamate: step 2/4. Functionally, catalyzes the ATP-dependent phosphorylation of N-acetyl-L-glutamate. The polypeptide is Acetylglutamate kinase (Proteus mirabilis (strain HI4320)).